A 318-amino-acid polypeptide reads, in one-letter code: Glycine--tRNA ligase alpha subunit (318 aa).

Belongs to the class-II aminoacyl-tRNA synthetase family. In terms of assembly, tetramer of two alpha and two beta subunits.

It is found in the cytoplasm. The enzyme catalyses tRNA(Gly) + glycine + ATP = glycyl-tRNA(Gly) + AMP + diphosphate. In Moraxella catarrhalis (Branhamella catarrhalis), this protein is Glycine--tRNA ligase alpha subunit (glyQ).